Consider the following 312-residue polypeptide: Serine/threonine-protein phosphatase CPPED1 (312 aa).

At serine 2 the chain carries Phosphoserine. Residues 47–250 (KAWSTGNCDA…AVFSGHYHRN (204 aa)) are catalytic. A divalent metal cation contacts are provided by aspartate 90, asparagine 127, and histidine 246. At serine 293 the chain carries Phosphoserine.

It belongs to the metallophosphoesterase superfamily. CPPED1 family. A divalent metal cation is required as a cofactor.

It is found in the cytoplasm. It carries out the reaction O-phospho-L-seryl-[protein] + H2O = L-seryl-[protein] + phosphate. The catalysed reaction is O-phospho-L-threonyl-[protein] + H2O = L-threonyl-[protein] + phosphate. Functionally, protein phosphatase that dephosphorylates AKT family kinase specifically at 'Ser-473', blocking cell cycle progression and promoting cell apoptosis. May play an inhibitory role in glucose uptake by adipocytes. This chain is Serine/threonine-protein phosphatase CPPED1 (Cpped1), found in Mus musculus (Mouse).